A 453-amino-acid polypeptide reads, in one-letter code: Dihydrolipoyllysine-residue succinyltransferase component of 2-oxoglutarate dehydrogenase complex, mitochondrial (453 aa).

The transit peptide at 1–67 directs the protein to the mitochondrion; the sequence is MLSRSRCVSR…RFFRTTAVCK (67 aa). In terms of domain architecture, Lipoyl-binding spans 70–144; it reads LVTVKTPAFA…EGGTPLFTLR (75 aa). S81 is subject to Phosphoserine. K110 bears the N6-lipoyllysine mark. Low complexity predominate over residues 152–172; the sequence is KAKPAEAPAAAAPKAEPTAAA. The interval 152-225 is disordered; sequence KAKPAEAPAA…GKGLRSEHRE (74 aa). An N6-acetyllysine modification is found at K154. A compositionally biased stretch (pro residues) spans 173-196; the sequence is VPPPAAPIPTQMPPVPSPSQPPSG. Residues K267, K272, K273, K277, and K307 each carry the N6-acetyllysine modification. Active-site residues include H424 and D428.

It belongs to the 2-oxoacid dehydrogenase family. In terms of assembly, the 2-oxoglutarate dehydrogenase complex is composed of OGDH (2-oxoglutarate dehydrogenase; E1), DLST (dihydrolipoamide succinyltransferase; E2), DLD (dihydrolipoamide dehydrogenase; E3) and the assembly factor KGD4. It contains multiple copies of the three enzymatic components (E1, E2 and E3). In the nucleus, the 2-oxoglutarate dehydrogenase complex associates with KAT2A. Interacts with ABHD11; this interaction maintains the functional lipoylation of the 2-oxoglutarate dehydrogenase complex. (R)-lipoate serves as cofactor.

The protein localises to the mitochondrion matrix. It localises to the nucleus. The catalysed reaction is N(6)-[(R)-dihydrolipoyl]-L-lysyl-[protein] + succinyl-CoA = N(6)-[(R)-S(8)-succinyldihydrolipoyl]-L-lysyl-[protein] + CoA. Its pathway is amino-acid degradation; L-lysine degradation via saccharopine pathway; glutaryl-CoA from L-lysine: step 6/6. The protein operates within carbohydrate metabolism; tricarboxylic acid cycle. Its function is as follows. Dihydrolipoamide succinyltransferase (E2) component of the 2-oxoglutarate dehydrogenase complex. The 2-oxoglutarate dehydrogenase complex catalyzes the overall conversion of 2-oxoglutarate to succinyl-CoA and CO(2). The 2-oxoglutarate dehydrogenase complex is mainly active in the mitochondrion. A fraction of the 2-oxoglutarate dehydrogenase complex also localizes in the nucleus and is required for lysine succinylation of histones: associates with KAT2A on chromatin and provides succinyl-CoA to histone succinyltransferase KAT2A. This Homo sapiens (Human) protein is Dihydrolipoyllysine-residue succinyltransferase component of 2-oxoglutarate dehydrogenase complex, mitochondrial.